A 322-amino-acid polypeptide reads, in one-letter code: Homeobox protein DBX1-B (322 aa).

Positions 179-238 form a DNA-binding region, homeobox; it reads GMLRRAVFSDVQRKALEKMFQKQKYISKPDRKKLATKLGLKDSQVKIWFQNRRMKWRNSK. Disordered stretches follow at residues 238 to 266 and 296 to 322; these read KERE…LSDV and DLHF…ITVS. Residues 312–322 are compositionally biased toward acidic residues; that stretch reads SESEDEEITVS.

It belongs to the H2.0 homeobox family.

It is found in the nucleus. The sequence is that of Homeobox protein DBX1-B (dbx1b) from Danio rerio (Zebrafish).